The sequence spans 119 residues: Tubulin-specific chaperone A (119 aa).

It belongs to the TBCA family. In terms of assembly, supercomplex made of cofactors A to E. Cofactors A and D function by capturing and stabilizing tubulin in a quasi-native conformation. Cofactor E binds to the cofactor D-tubulin complex; interaction with cofactor C then causes the release of tubulin polypeptides that are committed to the native state.

The protein localises to the cytoplasm. It is found in the cytoskeleton. In terms of biological role, required for the maintenance of microtubule structures and cell polarity. Beta-tubulin-folding protein; may have a regulatory role in the tubulin-folding pathway. This is Tubulin-specific chaperone A (alp31) from Schizosaccharomyces pombe (strain 972 / ATCC 24843) (Fission yeast).